The sequence spans 424 residues: Dihydroorotase (424 aa).

Residues H58 and H60 each contribute to the Zn(2+) site. Substrate-binding positions include 60–62 (HLR) and N92. Zn(2+) contacts are provided by D150, H177, and H230. N276 contributes to the substrate binding site. Residue D303 coordinates Zn(2+). Residue D303 is part of the active site. Substrate-binding positions include H307 and 321 to 322 (FG).

Belongs to the metallo-dependent hydrolases superfamily. DHOase family. Class I DHOase subfamily. Zn(2+) serves as cofactor.

It catalyses the reaction (S)-dihydroorotate + H2O = N-carbamoyl-L-aspartate + H(+). It participates in pyrimidine metabolism; UMP biosynthesis via de novo pathway; (S)-dihydroorotate from bicarbonate: step 3/3. Functionally, catalyzes the reversible cyclization of carbamoyl aspartate to dihydroorotate. The sequence is that of Dihydroorotase from Staphylococcus aureus (strain MRSA252).